Here is an 857-residue protein sequence, read N- to C-terminus: Median body protein (857 aa).

2 coiled-coil regions span residues 169–546 (HNAL…MRTE) and 571–793 (LAHL…TKAM).

The protein localises to the cytoplasm. It localises to the cytoskeleton. Functionally, structural component of the ventral disk involved in maintanance of a domed conformation of the disk required for proper attachment. May have a role in immobilizing the microtubules between cell divisions. This chain is Median body protein, found in Giardia intestinalis (strain ATCC 50803 / WB clone C6) (Giardia lamblia).